Here is a 418-residue protein sequence, read N- to C-terminus: Beta-arrestin-1 (418 aa).

Positions 1–163 (MGDKGTRVFK…LEEKIHKRNS (163 aa)) are interaction with SRC. The interaction with CHRM2 stretch occupies residues 45 to 86 (PEYLKERRVYVTLTCAFRYGREDLDVLGLTFRKDLFVANVQS). The residue at position 47 (tyrosine 47) is a Phosphotyrosine. Residues lysine 250, methionine 255, lysine 324, and lysine 326 each contribute to the 1D-myo-inositol hexakisphosphate site. Residues 318-418 (IVSYKVKVKL…GTGSPHLNNR (101 aa)) are interaction with TRAF6. 2 disordered regions span residues 353–374 (HPKP…PVDT) and 397–418 (KGMK…LNNR). The segment covering 355 to 366 (KPKEEPPHREVP) has biased composition (basic and acidic residues). Position 412 is a phosphoserine (serine 412). Serine 412 bears the Phosphoserine; by GRK5 mark.

The protein belongs to the arrestin family. In terms of assembly, monomer. Homodimer. Homooligomer; the self-association is mediated by InsP6-binding. Heterooligomer with ARRB2; the association is mediated by InsP6-binding. Interacts with ADRB2 (phosphorylated). Interacts with CHRM2 (phosphorylated). Interacts with LHCGR. Interacts with CYTH2 and CASR. Interacts with AP2B1 (dephosphorylated at 'Tyr-737'); phosphorylation of AP2B1 at 'Tyr-737' disrupts the interaction. Interacts (dephosphorylated at Ser-412) with CLTC. Interacts with CCR2 and GRK2. Interacts with CRR5. Interacts with PTAFR (phosphorylated on serine residues). Interacts with CLTC and MAP2K3. Interacts with CREB1. Interacts with TRAF6. Interacts with IGF1R and MDM2. Interacts with C5AR1. Interacts with PDE4D. Interacts with SRC (via the SH3 domain and the protein kinase domain); the interaction is independent of the phosphorylation state of SRC C-terminus. Interacts with TACR1. Interacts with RAF1. Interacts with CHUK, IKBKB and MAP3K14. Interacts with DVL1; the interaction is enhanced by phosphorylation of DVL1. Interacts with DVL2; the interaction is enhanced by phosphorylation of DVL2. Interacts with IGF1R. Associates with MAP kinase p38. Part of a MAPK signaling complex consisting of TACR1, ARRB1, SRC, MAPK1 (activated) and MAPK3 (activated). Part of a MAPK signaling complex consisting of F2RL1, ARRB1, RAF1, MAPK1 (activated) and MAPK3 (activated). Interacts with GPR143. Interacts with MAP2K4/MKK4. Interacts with HCK and CXCR1 (phosphorylated). Interacts with ACKR3 and ACKR4. Interacts with ARRDC1; the interaction is direct. Interacts with GPR61, GPR62 and GPR135. Post-translationally, constitutively phosphorylated at Ser-412 in the cytoplasm. At the plasma membrane, is rapidly dephosphorylated, a process that is required for clathrin binding and beta-2 adrenergic receptor/ADRB2 endocytosis but not for ADRB2 binding and desensitization. Once internalized, is rephosphorylated. In terms of processing, the ubiquitination status appears to regulate the formation and trafficking of beta-arrestin-GPCR complexes and signaling. Ubiquitination appears to occur GPCR-specific. Ubiquitinated by MDM2; the ubiquitination is required for rapid internalization of ADRB2. Deubiquitinated by USP33; the deubiquitination leads to a dissociation of the beta-arrestin-GPCR complex. Stimulation of a class A GPCR, such as ADRB2, induces transient ubiquitination and subsequently promotes association with USP33. In terms of tissue distribution, predominantly localized in neuronal tissues and in the spleen.

Its subcellular location is the cytoplasm. The protein localises to the nucleus. It is found in the cell membrane. It localises to the membrane. The protein resides in the clathrin-coated pit. Its subcellular location is the cell projection. The protein localises to the pseudopodium. It is found in the cytoplasmic vesicle. Functionally, functions in regulating agonist-mediated G-protein coupled receptor (GPCR) signaling by mediating both receptor desensitization and resensitization processes. During homologous desensitization, beta-arrestins bind to the GPRK-phosphorylated receptor and sterically preclude its coupling to the cognate G-protein; the binding appears to require additional receptor determinants exposed only in the active receptor conformation. The beta-arrestins target many receptors for internalization by acting as endocytic adapters (CLASPs, clathrin-associated sorting proteins) and recruiting the GPRCs to the adapter protein 2 complex 2 (AP-2) in clathrin-coated pits (CCPs). However, the extent of beta-arrestin involvement appears to vary significantly depending on the receptor, agonist and cell type. Internalized arrestin-receptor complexes traffic to intracellular endosomes, where they remain uncoupled from G-proteins. Two different modes of arrestin-mediated internalization occur. Class A receptors, like ADRB2, OPRM1, ENDRA, D1AR and ADRA1B dissociate from beta-arrestin at or near the plasma membrane and undergo rapid recycling. Class B receptors, like AVPR2, AGTR1, NTSR1, TRHR and TACR1 internalize as a complex with arrestin and traffic with it to endosomal vesicles, presumably as desensitized receptors, for extended periods of time. Receptor resensitization then requires that receptor-bound arrestin is removed so that the receptor can be dephosphorylated and returned to the plasma membrane. Involved in internalization of P2RY4 and UTP-stimulated internalization of P2RY2. Involved in phosphorylation-dependent internalization of OPRD1 ands subsequent recycling. Involved in the degradation of cAMP by recruiting cAMP phosphodiesterases to ligand-activated receptors. Beta-arrestins function as multivalent adapter proteins that can switch the GPCR from a G-protein signaling mode that transmits short-lived signals from the plasma membrane via small molecule second messengers and ion channels to a beta-arrestin signaling mode that transmits a distinct set of signals that are initiated as the receptor internalizes and transits the intracellular compartment. Acts as a signaling scaffold for MAPK pathways such as MAPK1/3 (ERK1/2). ERK1/2 activated by the beta-arrestin scaffold is largely excluded from the nucleus and confined to cytoplasmic locations such as endocytic vesicles, also called beta-arrestin signalosomes. Recruits c-Src/SRC to ADRB2 resulting in ERK activation. GPCRs for which the beta-arrestin-mediated signaling relies on both ARRB1 and ARRB2 (codependent regulation) include ADRB2, F2RL1 and PTH1R. For some GPCRs the beta-arrestin-mediated signaling relies on either ARRB1 or ARRB2 and is inhibited by the other respective beta-arrestin form (reciprocal regulation). Inhibits ERK1/2 signaling in AGTR1- and AVPR2-mediated activation (reciprocal regulation). Is required for SP-stimulated endocytosis of NK1R and recruits c-Src/SRC to internalized NK1R resulting in ERK1/2 activation, which is required for the antiapoptotic effects of SP. Is involved in proteinase-activated F2RL1-mediated ERK activity. Acts as a signaling scaffold for the AKT1 pathway. Is involved in alpha-thrombin-stimulated AKT1 signaling. Is involved in IGF1-stimulated AKT1 signaling leading to increased protection from apoptosis. Involved in activation of the p38 MAPK signaling pathway and in actin bundle formation. Involved in F2RL1-mediated cytoskeletal rearrangement and chemotaxis. Involved in AGTR1-mediated stress fiber formation by acting together with GNAQ to activate RHOA. Appears to function as signaling scaffold involved in regulation of MIP-1-beta-stimulated CCR5-dependent chemotaxis. Involved in attenuation of NF-kappa-B-dependent transcription in response to GPCR or cytokine stimulation by interacting with and stabilizing CHUK. May serve as nuclear messenger for GPCRs. Involved in OPRD1-stimulated transcriptional regulation by translocating to CDKN1B and FOS promoter regions and recruiting EP300 resulting in acetylation of histone H4. Involved in regulation of LEF1 transcriptional activity via interaction with DVL1 and/or DVL2 Also involved in regulation of receptors other than GPCRs. Involved in Toll-like receptor and IL-1 receptor signaling through the interaction with TRAF6 which prevents TRAF6 autoubiquitination and oligomerization required for activation of NF-kappa-B and JUN. Binds phosphoinositides. Binds inositolhexakisphosphate (InsP6). Involved in IL8-mediated granule release in neutrophils. Required for atypical chemokine receptor ACKR2-induced RAC1-LIMK1-PAK1-dependent phosphorylation of cofilin (CFL1) and for the up-regulation of ACKR2 from endosomal compartment to cell membrane, increasing its efficiency in chemokine uptake and degradation. Involved in the internalization of the atypical chemokine receptor ACKR3. Negatively regulates the NOTCH signaling pathway by mediating the ubiquitination and degradation of NOTCH1 by ITCH. Participates in the recruitment of the ubiquitin-protein ligase to the receptor. The chain is Beta-arrestin-1 from Rattus norvegicus (Rat).